A 276-amino-acid chain; its full sequence is Undecaprenyl-diphosphatase (276 aa).

The next 8 helical transmembrane spans lie at M1 to V21, A39 to F59, Y84 to F104, L115 to Y135, L159 to G179, F188 to A208, Q222 to L242, and F253 to L273.

Belongs to the UppP family.

It is found in the cell membrane. It catalyses the reaction di-trans,octa-cis-undecaprenyl diphosphate + H2O = di-trans,octa-cis-undecaprenyl phosphate + phosphate + H(+). Its function is as follows. Catalyzes the dephosphorylation of undecaprenyl diphosphate (UPP). Confers resistance to bacitracin. In Mycolicibacterium smegmatis (strain ATCC 700084 / mc(2)155) (Mycobacterium smegmatis), this protein is Undecaprenyl-diphosphatase.